A 357-amino-acid chain; its full sequence is UDP-arabinopyranose mutase 1 (357 aa).

Residue V2 is modified to N-acetylvaline. A DXD motif motif is present at residues 110-112; it reads DDD. The N-linked (Glc...) arginine glycan is linked to R158.

The protein belongs to the RGP family. In terms of assembly, heteromers with RGP2, RGP3, RGP4 and RGP5. Mn(2+) is required as a cofactor. It depends on Mg(2+) as a cofactor. Post-translationally, reversibly glycosylated in vitro by UDP-glucose, UDP-xylose and UDP-galactose, but not UDP-mannose. In terms of tissue distribution, predominantly expressed in shoot and root apical meristems. Expressed in epidermal cells of leaves, inflorescence stems and seed coat. Expressed in pollen.

It is found in the cytoplasm. The protein resides in the cytosol. It localises to the golgi apparatus. It carries out the reaction UDP-beta-L-arabinofuranose = UDP-beta-L-arabinopyranose. UDP-L-arabinose mutase involved in the biosynthesis of cell wall non-cellulosic polysaccharides. Catalyzes the interconvertion of UDP-L-arabinopyranose (UDP-Arap) and UDP-L-arabinofuranose (UDP-Araf) in vitro. Preferentially catalyzes the formation of UDP-Arap from UDP-Araf. At thermodynamic equilibrium in vitro the ratio of the pyranose form over the furanose form is 95:5. Is not active on other UDP-sugars (UDP-Gal, UDP-Xyl, UDP-Glc, GDP-Man and GDP-Fuc). Functions redundantly with RGP2 and is essential for proper cell walls and pollen development. Probably involved in the formation of the pectocellulosic cell wall layer intine. Is probably active as heteromer in vivo. The chain is UDP-arabinopyranose mutase 1 from Arabidopsis thaliana (Mouse-ear cress).